The chain runs to 265 residues: 5'-nucleotidase SurE (265 aa).

Positions 8, 9, 40, and 98 each coordinate a divalent metal cation.

The protein belongs to the SurE nucleotidase family. It depends on a divalent metal cation as a cofactor.

The protein localises to the cytoplasm. The enzyme catalyses a ribonucleoside 5'-phosphate + H2O = a ribonucleoside + phosphate. In terms of biological role, nucleotidase that shows phosphatase activity on nucleoside 5'-monophosphates. This is 5'-nucleotidase SurE from Nostoc sp. (strain PCC 7120 / SAG 25.82 / UTEX 2576).